Here is a 94-residue protein sequence, read N- to C-terminus: Large ribosomal subunit protein eL36 (94 aa).

Over residues 1–25 (MKNAYKKVRVRYPVKRPDVKRKQRG) the composition is skewed to basic residues. The interval 1 to 30 (MKNAYKKVRVRYPVKRPDVKRKQRGPRAET) is disordered.

The protein belongs to the eukaryotic ribosomal protein eL36 family. In terms of assembly, component of the large ribosomal subunit.

It is found in the cytoplasm. This is Large ribosomal subunit protein eL36 (RPL36) from Encephalitozoon cuniculi (strain GB-M1) (Microsporidian parasite).